The sequence spans 474 residues: Pyruvate kinase (474 aa).

R33 lines the substrate pocket. Positions 35, 37, and 67 each coordinate K(+). 35-38 (NFSH) provides a ligand contact to ATP. ATP contacts are provided by R74 and K155. E220 is a binding site for Mg(2+). Positions 243, 244, and 276 each coordinate substrate. Position 244 (D244) interacts with Mg(2+).

This sequence belongs to the pyruvate kinase family. In terms of assembly, homotetramer. It depends on Mg(2+) as a cofactor. The cofactor is K(+).

The catalysed reaction is pyruvate + ATP = phosphoenolpyruvate + ADP + H(+). It participates in carbohydrate degradation; glycolysis; pyruvate from D-glyceraldehyde 3-phosphate: step 5/5. The sequence is that of Pyruvate kinase (pyk) from Corynebacterium efficiens (strain DSM 44549 / YS-314 / AJ 12310 / JCM 11189 / NBRC 100395).